Consider the following 335-residue polypeptide: Holliday junction branch migration complex subunit RuvB (335 aa).

A large ATPase domain (RuvB-L) region spans residues 4–184 (ADRLIDATEK…FGIVQRLEFY (181 aa)). ATP is bound by residues I23, R24, G65, K68, T69, T70, 131–133 (EDY), R174, Y184, and R221. Position 69 (T69) interacts with Mg(2+). Residues 185-255 (SVEDLSYIVG…VAELALNMID (71 aa)) are small ATPAse domain (RuvB-S). Residues 258–335 (KSGFDYMDRK…HHFGLLPKQD (78 aa)) are head domain (RuvB-H). The DNA site is built by R313 and R318.

It belongs to the RuvB family. As to quaternary structure, homohexamer. Forms an RuvA(8)-RuvB(12)-Holliday junction (HJ) complex. HJ DNA is sandwiched between 2 RuvA tetramers; dsDNA enters through RuvA and exits via RuvB. An RuvB hexamer assembles on each DNA strand where it exits the tetramer. Each RuvB hexamer is contacted by two RuvA subunits (via domain III) on 2 adjacent RuvB subunits; this complex drives branch migration. In the full resolvosome a probable DNA-RuvA(4)-RuvB(12)-RuvC(2) complex forms which resolves the HJ.

The protein resides in the cytoplasm. It catalyses the reaction ATP + H2O = ADP + phosphate + H(+). The RuvA-RuvB-RuvC complex processes Holliday junction (HJ) DNA during genetic recombination and DNA repair, while the RuvA-RuvB complex plays an important role in the rescue of blocked DNA replication forks via replication fork reversal (RFR). RuvA specifically binds to HJ cruciform DNA, conferring on it an open structure. The RuvB hexamer acts as an ATP-dependent pump, pulling dsDNA into and through the RuvAB complex. RuvB forms 2 homohexamers on either side of HJ DNA bound by 1 or 2 RuvA tetramers; 4 subunits per hexamer contact DNA at a time. Coordinated motions by a converter formed by DNA-disengaged RuvB subunits stimulates ATP hydrolysis and nucleotide exchange. Immobilization of the converter enables RuvB to convert the ATP-contained energy into a lever motion, pulling 2 nucleotides of DNA out of the RuvA tetramer per ATP hydrolyzed, thus driving DNA branch migration. The RuvB motors rotate together with the DNA substrate, which together with the progressing nucleotide cycle form the mechanistic basis for DNA recombination by continuous HJ branch migration. Branch migration allows RuvC to scan DNA until it finds its consensus sequence, where it cleaves and resolves cruciform DNA. The polypeptide is Holliday junction branch migration complex subunit RuvB (Pseudoalteromonas translucida (strain TAC 125)).